Reading from the N-terminus, the 651-residue chain is Probable potassium transport system protein Kup (651 aa).

Over residues 1 to 16 the composition is skewed to basic and acidic residues; the sequence is MRDSPGSKSSSERWHD. The interval 1–31 is disordered; the sequence is MRDSPGSKSSSERWHDTMAVSDPTAEGKDES. 12 helical membrane-spanning segments follow: residues 38 to 58, 74 to 94, 129 to 149, 168 to 188, 197 to 217, 232 to 252, 276 to 296, 309 to 329, 366 to 386, 396 to 416, 423 to 443, and 448 to 468; these read FWAL…TSPL, VTPA…FIVV, LLLL…SMIT, LQDY…AVQS, AFAP…VLHI, AIHF…LVFL, WFCL…ALIL, LAPA…TVIA, IYLP…VLLF, YGIA…VVVW, PAAA…FFSA, and LFDG…LIWT.

Belongs to the HAK/KUP transporter (TC 2.A.72) family.

The protein resides in the cell inner membrane. The catalysed reaction is K(+)(in) + H(+)(in) = K(+)(out) + H(+)(out). Functionally, transport of potassium into the cell. Likely operates as a K(+):H(+) symporter. This Nitrobacter winogradskyi (strain ATCC 25391 / DSM 10237 / CIP 104748 / NCIMB 11846 / Nb-255) protein is Probable potassium transport system protein Kup.